Here is a 122-residue protein sequence, read N- to C-terminus: Large ribosomal subunit protein bL12 (122 aa).

The protein belongs to the bacterial ribosomal protein bL12 family. In terms of assembly, homodimer. Part of the ribosomal stalk of the 50S ribosomal subunit. Forms a multimeric L10(L12)X complex, where L10 forms an elongated spine to which 2 to 4 L12 dimers bind in a sequential fashion. Binds GTP-bound translation factors.

In terms of biological role, forms part of the ribosomal stalk which helps the ribosome interact with GTP-bound translation factors. Is thus essential for accurate translation. The polypeptide is Large ribosomal subunit protein bL12 (Buchnera aphidicola subsp. Acyrthosiphon pisum (strain Tuc7)).